The primary structure comprises 311 residues: MVDQRIKFRHLQTFVEVARQKSVIRAAEILHVSQPAVTKTIRELEDVLGVSLLEREGRGIRISRYGEVFLRHAGATMTALRQAVDSVSQEAARAGPPVRVGALPTVSVRIMPKAMSGFLAEKTGSPVKIVTGENAVLLEQLRVGDLDLVVGRLAAPQKMAGFSFEHLYSEKVRFVVRAGHPLLSPGLSVFDHLHEYPVLMPTRQSVIGPVVEQFLIANGVPALPIRIETVSDAFGRAFLRTSDAIWIISEGVVAADVADGILAILPVETGDTSGPVGLTVRADTQPSLPLSLLMQAIREAAGELFDGRTEG.

Residues 6 to 63 (IKFRHLQTFVEVARQKSVIRAAEILHVSQPAVTKTIRELEDVLGVSLLEREGRGIRIS) form the HTH lysR-type domain. The segment at residues 23–42 (VIRAAEILHVSQPAVTKTIR) is a DNA-binding region (H-T-H motif).

The protein belongs to the LysR transcriptional regulatory family.

Its function is as follows. Activates transcription of the pcaDCHGB operon for the catabolism of the phenolic compound protocatechuate. The chain is HTH-type transcriptional regulator PcaQ (pcaQ) from Agrobacterium fabrum (strain C58 / ATCC 33970) (Agrobacterium tumefaciens (strain C58)).